A 259-amino-acid chain; its full sequence is Imidazole glycerol phosphate synthase subunit HisF (259 aa).

Catalysis depends on residues Asp11 and Asp130.

It belongs to the HisA/HisF family. As to quaternary structure, heterodimer of HisH and HisF.

Its subcellular location is the cytoplasm. The enzyme catalyses 5-[(5-phospho-1-deoxy-D-ribulos-1-ylimino)methylamino]-1-(5-phospho-beta-D-ribosyl)imidazole-4-carboxamide + L-glutamine = D-erythro-1-(imidazol-4-yl)glycerol 3-phosphate + 5-amino-1-(5-phospho-beta-D-ribosyl)imidazole-4-carboxamide + L-glutamate + H(+). It functions in the pathway amino-acid biosynthesis; L-histidine biosynthesis; L-histidine from 5-phospho-alpha-D-ribose 1-diphosphate: step 5/9. Functionally, IGPS catalyzes the conversion of PRFAR and glutamine to IGP, AICAR and glutamate. The HisF subunit catalyzes the cyclization activity that produces IGP and AICAR from PRFAR using the ammonia provided by the HisH subunit. The chain is Imidazole glycerol phosphate synthase subunit HisF from Acidovorax ebreus (strain TPSY) (Diaphorobacter sp. (strain TPSY)).